An 843-amino-acid chain; its full sequence is Aminopeptidase N (843 aa).

Residues Glu120 and 252–256 (GAMEN) contribute to the substrate site. His288 lines the Zn(2+) pocket. Glu289 serves as the catalytic Proton acceptor. His292 and Glu311 together coordinate Zn(2+).

It belongs to the peptidase M1 family. As to quaternary structure, monomer. The cofactor is Zn(2+).

It is found in the cytoplasm. It carries out the reaction Release of an N-terminal amino acid, Xaa-|-Yaa- from a peptide, amide or arylamide. Xaa is preferably Ala, but may be most amino acids including Pro (slow action). When a terminal hydrophobic residue is followed by a prolyl residue, the two may be released as an intact Xaa-Pro dipeptide.. In terms of biological role, aminopeptidase with broad substrate specificity to several peptides. In Lactobacillus delbrueckii subsp. lactis, this protein is Aminopeptidase N (pepN).